The primary structure comprises 195 residues: Probable DNA-directed RNA polymerase subunit delta (195 aa).

The region spanning 14-81 is the HTH HARE-type domain; it reads LSMIEVAHAI…GDNTWGLRAW (68 aa). Residues 91–195 are disordered; that stretch reads TVGETEDEED…DEEDKEDDEE (105 aa). Composition is skewed to acidic residues over residues 116 to 171 and 179 to 195; these read TDDD…EDQL and FGDD…DDEE.

It belongs to the RpoE family. As to quaternary structure, RNAP is composed of a core of 2 alpha, a beta and a beta' subunits. The core is associated with a delta subunit and one of several sigma factors.

In terms of biological role, participates in both the initiation and recycling phases of transcription. In the presence of the delta subunit, RNAP displays an increased specificity of transcription, a decreased affinity for nucleic acids, and an increased efficiency of RNA synthesis because of enhanced recycling. In Limosilactobacillus fermentum (strain NBRC 3956 / LMG 18251) (Lactobacillus fermentum), this protein is Probable DNA-directed RNA polymerase subunit delta.